The following is a 334-amino-acid chain: Probable tRNA pseudouridine synthase B (334 aa).

Aspartate 82 acts as the Nucleophile in catalysis. The region spanning 250–325 (LPKIWIKDSA…IAVDVEKVFM (76 aa)) is the PUA domain.

Belongs to the pseudouridine synthase TruB family. Type 2 subfamily.

It catalyses the reaction uridine(55) in tRNA = pseudouridine(55) in tRNA. Functionally, could be responsible for synthesis of pseudouridine from uracil-55 in the psi GC loop of transfer RNAs. In Pyrococcus horikoshii (strain ATCC 700860 / DSM 12428 / JCM 9974 / NBRC 100139 / OT-3), this protein is Probable tRNA pseudouridine synthase B.